The following is a 122-amino-acid chain: Ribosome-binding factor A (122 aa).

It belongs to the RbfA family. In terms of assembly, monomer. Binds 30S ribosomal subunits, but not 50S ribosomal subunits or 70S ribosomes.

It is found in the cytoplasm. Functionally, one of several proteins that assist in the late maturation steps of the functional core of the 30S ribosomal subunit. Associates with free 30S ribosomal subunits (but not with 30S subunits that are part of 70S ribosomes or polysomes). Required for efficient processing of 16S rRNA. May interact with the 5'-terminal helix region of 16S rRNA. The polypeptide is Ribosome-binding factor A (Pelobacter propionicus (strain DSM 2379 / NBRC 103807 / OttBd1)).